Consider the following 285-residue polypeptide: Bifunctional protein FolD (285 aa).

Residues 165 to 167 (GRS), S190, and I231 contribute to the NADP(+) site.

This sequence belongs to the tetrahydrofolate dehydrogenase/cyclohydrolase family. As to quaternary structure, homodimer.

The catalysed reaction is (6R)-5,10-methylene-5,6,7,8-tetrahydrofolate + NADP(+) = (6R)-5,10-methenyltetrahydrofolate + NADPH. The enzyme catalyses (6R)-5,10-methenyltetrahydrofolate + H2O = (6R)-10-formyltetrahydrofolate + H(+). It functions in the pathway one-carbon metabolism; tetrahydrofolate interconversion. Functionally, catalyzes the oxidation of 5,10-methylenetetrahydrofolate to 5,10-methenyltetrahydrofolate and then the hydrolysis of 5,10-methenyltetrahydrofolate to 10-formyltetrahydrofolate. The protein is Bifunctional protein FolD of Acetivibrio thermocellus (strain ATCC 27405 / DSM 1237 / JCM 9322 / NBRC 103400 / NCIMB 10682 / NRRL B-4536 / VPI 7372) (Clostridium thermocellum).